The sequence spans 1053 residues: MATQTDKQTIGRHLEQVPKASNLISWSRNGFIAYIPPIITTTTTTPTTTTTTNNNKSNLLLTYIKNSDGKKWQLASPEPINIKLENNFLPQLSLVSWGSLNTDLAVSDIYGNFYILLAGVGLLDPNHIPSTITTTSTIKTEGNTEKNKDTKQIGNGSGTNGHGDSPINTPSFELTSYNHMEMIYRDIINPDINVAVNPGASIVAFKWLNIEKPQIVNKAATRLAENPTTTSSNSSSSIYGYGINQYQPYGVCHPIPTKQACVALRKNGQFILFYQGEHKVEYHKICCNLTDNISIIEKASIGFNNDKQIIVTAWDSLSNDINVYSIDINWGFLVESAKRQKLDQHYHTPKEAQKPPRLTLKKLHQMKPIQCFKEEDGESQSQSVVPEMGKLKVEELSSIDIISSNPDPKSGLSILITYGSSIIYRYALEKSDSSNTTSGGETSKNPISQAFYNLGVEKKIDWKGDDSSVRLVFKDKLMRRGQIESIINGFLDLSSLIIYKDGTVDVVDTTSKQIVNNSKNNNSVTGDEMELDNNDYPPKLISNLFDQGFQFPKISHKNRLVLAISPTMSSIVYTEIYGETVNLQLKPLERIDNFGTNSHDLYYTSVAFAHRYAFALYTSTCSDDLLLLIQSEINRIKDAVDGDTITRNKLGKQLCDSVIIECHKAINFHLDTITKESLDKLLSNNASLQKLLSLQLILGEFQQSSHFPNNYVVPDIAWIVLNLRSASLGIMFTLSSIYRQVSKKKPSEDTLQDSITRGECIMSIIGNFKWLIDLLVYLNQELLQLIYVKNNFLNNGNTTTSKLTLSNSIVLPLILNKVSRLFLMYAISAMGRTHEILKKLHKDLTEANKLFAPMKESLNRYFSISNNSPITVNLFESYLRECDALLNKEVPQKILTANNSINGNVNGNSGTSTNKPYSALKFEQKLLIKGIDVNDDNDSSTKISNTIIEELSNMILDRYSISISRETKLSELMFYDTDWLNIGINKKEVPSYTIDALRKLIISDSSTSTSLAKGEKLRVCTRCRAVSLVGDVTGLWTMVFQRTCMCGNAWVNV.

Residues 139–170 are disordered; it reads KTEGNTEKNKDTKQIGNGSGTNGHGDSPINTP. Over residues 142 to 151 the composition is skewed to basic and acidic residues; the sequence is GNTEKNKDTK.

Belongs to the Mediator complex subunit 16 family. Component of the Mediator complex.

It is found in the nucleus. Its function is as follows. Component of the Mediator complex, a coactivator involved in the regulated transcription of nearly all RNA polymerase II-dependent genes. Mediator functions as a bridge to convey information from gene-specific regulatory proteins to the basal RNA polymerase II transcription machinery. Mediator is recruited to promoters by direct interactions with regulatory proteins and serves as a scaffold for the assembly of a functional preinitiation complex with RNA polymerase II and the general transcription factors. The chain is Mediator of RNA polymerase II transcription subunit 16 (SIN4) from Candida albicans (strain SC5314 / ATCC MYA-2876) (Yeast).